The sequence spans 437 residues: Probable inactive DNA (cytosine-5)-methyltransferase DRM1B (437 aa).

UBA domains follow at residues S20–L60 and E120–P164. Residues V243 to C437 form the SAM-dependent MTase DRM-type domain.

It belongs to the class I-like SAM-binding methyltransferase superfamily. DRM-methyltransferase family.

It localises to the nucleus. Its function is as follows. Involved in de novo DNA methylation. Involved in RNA-directed DNA methylation (RdDM). The chain is Probable inactive DNA (cytosine-5)-methyltransferase DRM1B from Oryza sativa subsp. japonica (Rice).